The following is a 258-amino-acid chain: MSGILAGLVAEAESQTGRRRALRTEAKLTELAAAAPPARDFAAALREPGLAVIAEMKPRSPSKGPLTDDYRPAELARAYQGGGAHAVSVLTHEAGFGGSPDHLAVARAACELPVLRKDFVVDEYQILEARALGADALLLIVAALAPARLAALLARTRACGMEALVEVHDEREVDVALEAGADVIGVNHRDLRDFSIDRTLSARLRGRVGTGRVMVGESGVRGAPDARALEAAGVDAVLVGELLMRAGDPGTTIKGLVG.

Belongs to the TrpC family.

It catalyses the reaction 1-(2-carboxyphenylamino)-1-deoxy-D-ribulose 5-phosphate + H(+) = (1S,2R)-1-C-(indol-3-yl)glycerol 3-phosphate + CO2 + H2O. Its pathway is amino-acid biosynthesis; L-tryptophan biosynthesis; L-tryptophan from chorismate: step 4/5. The function of the second trp operon in S.coelicolor is to produce tryptophan for the biosynthesis of calcium-dependent antibiotic (CDA). The protein is Indole-3-glycerol phosphate synthase 2 (trpC2) of Streptomyces coelicolor (strain ATCC BAA-471 / A3(2) / M145).